A 304-amino-acid chain; its full sequence is Ribosomal RNA small subunit methyltransferase H (304 aa).

S-adenosyl-L-methionine is bound by residues 47–49 (GGH), D66, F93, D108, and Q115.

Belongs to the methyltransferase superfamily. RsmH family.

It localises to the cytoplasm. The enzyme catalyses cytidine(1402) in 16S rRNA + S-adenosyl-L-methionine = N(4)-methylcytidine(1402) in 16S rRNA + S-adenosyl-L-homocysteine + H(+). In terms of biological role, specifically methylates the N4 position of cytidine in position 1402 (C1402) of 16S rRNA. This chain is Ribosomal RNA small subunit methyltransferase H, found in Prochlorococcus marinus (strain NATL2A).